Consider the following 388-residue polypeptide: Chorismate synthase (388 aa).

NADP(+)-binding residues include Arg39 and Arg45. Residues Arg130–Ser132, Asn251–Ala252, Gly296, Lys311–Thr315, and Arg337 contribute to the FMN site.

Belongs to the chorismate synthase family. As to quaternary structure, homotetramer. The cofactor is FMNH2.

The catalysed reaction is 5-O-(1-carboxyvinyl)-3-phosphoshikimate = chorismate + phosphate. The protein operates within metabolic intermediate biosynthesis; chorismate biosynthesis; chorismate from D-erythrose 4-phosphate and phosphoenolpyruvate: step 7/7. Its function is as follows. Catalyzes the anti-1,4-elimination of the C-3 phosphate and the C-6 proR hydrogen from 5-enolpyruvylshikimate-3-phosphate (EPSP) to yield chorismate, which is the branch point compound that serves as the starting substrate for the three terminal pathways of aromatic amino acid biosynthesis. This reaction introduces a second double bond into the aromatic ring system. This is Chorismate synthase from Streptococcus pyogenes serotype M12 (strain MGAS2096).